Consider the following 355-residue polypeptide: Phytoene synthase (355 aa).

Belongs to the phytoene/squalene synthase family. It depends on ATP as a cofactor. The cofactor is Mn(2+). Mg(2+) is required as a cofactor.

It functions in the pathway carotenoid biosynthesis; phytoene biosynthesis. In terms of biological role, involved in the biosynthesis of carotenoids. Catalyzes the condensation of two molecules of geranylgeranyl diphosphate (GGPP) to give prephytoene diphosphate (PPPP) and the subsequent rearrangement of the cyclopropylcarbinyl intermediate to yield phytoene. This chain is Phytoene synthase (crtB), found in Cereibacter sphaeroides (strain ATCC 17023 / DSM 158 / JCM 6121 / CCUG 31486 / LMG 2827 / NBRC 12203 / NCIMB 8253 / ATH 2.4.1.) (Rhodobacter sphaeroides).